The sequence spans 207 residues: Alpha-1-acid glycoprotein 8 (207 aa).

The first 18 residues, 1–18 (MALHTVLIMLSLLPMLEA), serve as a signal peptide directing secretion. 5 N-linked (GlcNAc...) asparagine glycosylation sites follow: Asn-25, Asn-34, Asn-76, Asn-94, and Asn-104. Cys-91 and Cys-184 are oxidised to a cystine.

It belongs to the calycin superfamily. Lipocalin family. As to expression, expressed by the liver and secreted in plasma.

It localises to the secreted. Its function is as follows. Functions as a transport protein in the blood stream. Binds various ligands in the interior of its beta-barrel domain. Appears to function in modulating the activity of the immune system during the acute-phase reaction. The polypeptide is Alpha-1-acid glycoprotein 8 (Orm8) (Mus caroli (Ryukyu mouse)).